Consider the following 202-residue polypeptide: MTTLLLVHSSARTGGSRTREMADILTAEWHARGDNHQVRVVDLADTPPPHVDAATIRHFFGLAGAEEPATASLALSDTWIEQLLQADALAFAVPMYNFSLPSTLKAWLDHVIRPRRTFRKVADGELEGLAGPKPALVMTASGGLFADTSLDHLRPYMKTALAFMGIDSPRFVDWEGTARADIDPAAQRRTVTAQLREWVHAC.

FMN contacts are provided by residues serine 10 and 95 to 98 (MYNF).

Belongs to the azoreductase type 1 family. Homodimer. The cofactor is FMN.

It carries out the reaction 2 a quinone + NADH + H(+) = 2 a 1,4-benzosemiquinone + NAD(+). The enzyme catalyses N,N-dimethyl-1,4-phenylenediamine + anthranilate + 2 NAD(+) = 2-(4-dimethylaminophenyl)diazenylbenzoate + 2 NADH + 2 H(+). Quinone reductase that provides resistance to thiol-specific stress caused by electrophilic quinones. Its function is as follows. Also exhibits azoreductase activity. Catalyzes the reductive cleavage of the azo bond in aromatic azo compounds to the corresponding amines. The protein is FMN-dependent NADH:quinone oxidoreductase of Alkalilimnicola ehrlichii (strain ATCC BAA-1101 / DSM 17681 / MLHE-1).